The sequence spans 382 residues: MSWQQRIEQALAERRLNAAYRRRQTTEGGNGRQIRLGDRLYLNFSGNDYLGLSQDARVIAAWQQGARYGVGNGGSGHVTGFSAAHQALEEQLAAWLGYPRALLFISYAANQAVLAALMQKGDRILADRLSHASLLEAAGAVAGRRAPVPAQSTAGLARICLAKPCDGQRLAVTEGLFSMDGDGAPLAELHRLTRAAGAWLMVDDAHGIGVRGEQGRGSCWQQGVRPELLVATFGKAFGVSGAAVLCDEATAEYLLQFARHLIYSTAMPPAQACALQAALARIREGDDLRARLQDNIRRFRQGAAPLALTLTDSDTAIQPLLVGDNQRALDLATRLRECGLWVSAIRPPTVPPGGARLRLLLTAAHQSQDIDRLLEVLNDVSQ.

The substrate site is built by arginine 21 and histidine 131. 3 residues coordinate pyridoxal 5'-phosphate: serine 178, histidine 206, and threonine 232. Lysine 235 is modified (N6-(pyridoxal phosphate)lysine). Threonine 349 contacts substrate.

The protein belongs to the class-II pyridoxal-phosphate-dependent aminotransferase family. BioF subfamily. In terms of assembly, homodimer. Requires pyridoxal 5'-phosphate as cofactor.

It carries out the reaction 6-carboxyhexanoyl-[ACP] + L-alanine + H(+) = (8S)-8-amino-7-oxononanoate + holo-[ACP] + CO2. The protein operates within cofactor biosynthesis; biotin biosynthesis. Functionally, catalyzes the decarboxylative condensation of pimeloyl-[acyl-carrier protein] and L-alanine to produce 8-amino-7-oxononanoate (AON), [acyl-carrier protein], and carbon dioxide. The protein is 8-amino-7-oxononanoate synthase of Serratia marcescens.